The following is a 209-amino-acid chain: Uracil phosphoribosyltransferase (209 aa).

5-phospho-alpha-D-ribose 1-diphosphate-binding positions include Arg-79, Arg-104, and 131 to 139 (DPMLATGHS). Residues Ile-194 and 199–201 (GDA) contribute to the uracil site. Position 200 (Asp-200) interacts with 5-phospho-alpha-D-ribose 1-diphosphate.

The protein belongs to the UPRTase family. Mg(2+) is required as a cofactor.

The catalysed reaction is UMP + diphosphate = 5-phospho-alpha-D-ribose 1-diphosphate + uracil. It functions in the pathway pyrimidine metabolism; UMP biosynthesis via salvage pathway; UMP from uracil: step 1/1. With respect to regulation, allosterically activated by GTP. Functionally, catalyzes the conversion of uracil and 5-phospho-alpha-D-ribose 1-diphosphate (PRPP) to UMP and diphosphate. The polypeptide is Uracil phosphoribosyltransferase (Caulobacter vibrioides (strain ATCC 19089 / CIP 103742 / CB 15) (Caulobacter crescentus)).